The following is a 79-amino-acid chain: Small ribosomal subunit protein bS16c (79 aa).

It belongs to the bacterial ribosomal protein bS16 family.

It localises to the plastid. The protein resides in the chloroplast. In Staurastrum punctulatum (Green alga), this protein is Small ribosomal subunit protein bS16c.